A 72-amino-acid polypeptide reads, in one-letter code: MAAKMKKGSLVRVIRAQLENSLEAQASDRRLPDYLFHSKGEVLDLNEEYALVRFYVPTPNVWLRLDQIEALA.

It belongs to the complex I NdhO subunit family. As to quaternary structure, NDH-1 can be composed of about 15 different subunits; different subcomplexes with different compositions have been identified which probably have different functions.

Its subcellular location is the cellular thylakoid membrane. The enzyme catalyses a plastoquinone + NADH + (n+1) H(+)(in) = a plastoquinol + NAD(+) + n H(+)(out). It catalyses the reaction a plastoquinone + NADPH + (n+1) H(+)(in) = a plastoquinol + NADP(+) + n H(+)(out). NDH-1 shuttles electrons from an unknown electron donor, via FMN and iron-sulfur (Fe-S) centers, to quinones in the respiratory and/or the photosynthetic chain. The immediate electron acceptor for the enzyme in this species is believed to be plastoquinone. Couples the redox reaction to proton translocation, and thus conserves the redox energy in a proton gradient. Cyanobacterial NDH-1 also plays a role in inorganic carbon-concentration. The sequence is that of NAD(P)H-quinone oxidoreductase subunit O (ndhO) from Synechocystis sp. (strain ATCC 27184 / PCC 6803 / Kazusa).